Consider the following 202-residue polypeptide: ATP-dependent Clp protease proteolytic subunit (202 aa).

Serine 106 (nucleophile) is an active-site residue. Histidine 131 is an active-site residue.

This sequence belongs to the peptidase S14 family. As to quaternary structure, fourteen ClpP subunits assemble into 2 heptameric rings which stack back to back to give a disk-like structure with a central cavity, resembling the structure of eukaryotic proteasomes.

The protein localises to the cytoplasm. The enzyme catalyses Hydrolysis of proteins to small peptides in the presence of ATP and magnesium. alpha-casein is the usual test substrate. In the absence of ATP, only oligopeptides shorter than five residues are hydrolyzed (such as succinyl-Leu-Tyr-|-NHMec, and Leu-Tyr-Leu-|-Tyr-Trp, in which cleavage of the -Tyr-|-Leu- and -Tyr-|-Trp bonds also occurs).. Cleaves peptides in various proteins in a process that requires ATP hydrolysis. Has a chymotrypsin-like activity. Plays a major role in the degradation of misfolded proteins. The protein is ATP-dependent Clp protease proteolytic subunit of Variovorax paradoxus (strain S110).